The chain runs to 100 residues: Large ribosomal subunit protein uL23 (100 aa).

The protein belongs to the universal ribosomal protein uL23 family. Part of the 50S ribosomal subunit. Contacts protein L29, and trigger factor when it is bound to the ribosome.

Its function is as follows. One of the early assembly proteins it binds 23S rRNA. One of the proteins that surrounds the polypeptide exit tunnel on the outside of the ribosome. Forms the main docking site for trigger factor binding to the ribosome. This chain is Large ribosomal subunit protein uL23, found in Corynebacterium aurimucosum (strain ATCC 700975 / DSM 44827 / CIP 107346 / CN-1) (Corynebacterium nigricans).